The chain runs to 224 residues: Agamous-like MADS-box protein AGL9 homolog (224 aa).

In terms of domain architecture, MADS-box spans 3–57 (RGRVELKRIEGKINRQVTFAKRRNGLLKKAYELSVLCDAEVALIIFSNRGKLYEF). The K-box domain occupies 89–179 (EISSQQEYLK…KQRLMEGSQL (91 aa)).

Flower specific.

The protein resides in the nucleus. Its function is as follows. Probable transcription factor active in inflorescence development and floral organogenesis. This Solanum lycopersicum (Tomato) protein is Agamous-like MADS-box protein AGL9 homolog (TDR5).